Reading from the N-terminus, the 119-residue chain is Large ribosomal subunit protein bL20 (119 aa).

It belongs to the bacterial ribosomal protein bL20 family.

In terms of biological role, binds directly to 23S ribosomal RNA and is necessary for the in vitro assembly process of the 50S ribosomal subunit. It is not involved in the protein synthesizing functions of that subunit. This Streptococcus pneumoniae serotype 2 (strain D39 / NCTC 7466) protein is Large ribosomal subunit protein bL20.